Here is a 539-residue protein sequence, read N- to C-terminus: GMP synthase [glutamine-hydrolyzing] (539 aa).

Positions 4-202 constitute a Glutamine amidotransferase type-1 domain; the sequence is KILILDFGSQ…VLQIAGAKPD (199 aa). Cys-81 acts as the Nucleophile in catalysis. Active-site residues include His-176 and Glu-178. In terms of domain architecture, GMPS ATP-PPase spans 203–395; sequence WIMKNHIEEA…LGLPPEMVYR (193 aa). ATP is bound at residue 230–236; sequence SGGVDSS.

As to quaternary structure, homodimer.

The enzyme catalyses XMP + L-glutamine + ATP + H2O = GMP + L-glutamate + AMP + diphosphate + 2 H(+). It participates in purine metabolism; GMP biosynthesis; GMP from XMP (L-Gln route): step 1/1. Functionally, catalyzes the synthesis of GMP from XMP. In Burkholderia cenocepacia (strain ATCC BAA-245 / DSM 16553 / LMG 16656 / NCTC 13227 / J2315 / CF5610) (Burkholderia cepacia (strain J2315)), this protein is GMP synthase [glutamine-hydrolyzing].